Consider the following 270-residue polypeptide: 4-hydroxy-tetrahydrodipicolinate reductase (270 aa).

NAD(+) contacts are provided by residues 8–13 (GAAGRM) and Glu-34. Residue Arg-35 participates in NADP(+) binding. NAD(+) contacts are provided by residues 98–100 (GST) and 122–125 (SPNM). The active-site Proton donor/acceptor is the His-155. (S)-2,3,4,5-tetrahydrodipicolinate is bound at residue His-156. Lys-159 (proton donor) is an active-site residue. 165 to 166 (GT) contacts (S)-2,3,4,5-tetrahydrodipicolinate.

This sequence belongs to the DapB family.

The protein resides in the cytoplasm. It carries out the reaction (S)-2,3,4,5-tetrahydrodipicolinate + NAD(+) + H2O = (2S,4S)-4-hydroxy-2,3,4,5-tetrahydrodipicolinate + NADH + H(+). The catalysed reaction is (S)-2,3,4,5-tetrahydrodipicolinate + NADP(+) + H2O = (2S,4S)-4-hydroxy-2,3,4,5-tetrahydrodipicolinate + NADPH + H(+). It functions in the pathway amino-acid biosynthesis; L-lysine biosynthesis via DAP pathway; (S)-tetrahydrodipicolinate from L-aspartate: step 4/4. In terms of biological role, catalyzes the conversion of 4-hydroxy-tetrahydrodipicolinate (HTPA) to tetrahydrodipicolinate. This is 4-hydroxy-tetrahydrodipicolinate reductase from Anaeromyxobacter dehalogenans (strain 2CP-C).